A 305-amino-acid polypeptide reads, in one-letter code: GMP synthase [glutamine-hydrolyzing] subunit B (305 aa).

The 184-residue stretch at 2–185 folds into the GMPS ATP-PPase domain; it reads VEPTAFIDEK…LDLESIIAER (184 aa). 29-35 lines the ATP pocket; that stretch reads SGGVDSS.

As to quaternary structure, heterodimer composed of a glutamine amidotransferase subunit (A) and a GMP-binding subunit (B).

It catalyses the reaction XMP + L-glutamine + ATP + H2O = GMP + L-glutamate + AMP + diphosphate + 2 H(+). It functions in the pathway purine metabolism; GMP biosynthesis; GMP from XMP (L-Gln route): step 1/1. Its function is as follows. Catalyzes the synthesis of GMP from XMP. This is GMP synthase [glutamine-hydrolyzing] subunit B from Natronomonas pharaonis (strain ATCC 35678 / DSM 2160 / CIP 103997 / JCM 8858 / NBRC 14720 / NCIMB 2260 / Gabara) (Halobacterium pharaonis).